The primary structure comprises 170 residues: Adenine phosphoribosyltransferase (170 aa).

This sequence belongs to the purine/pyrimidine phosphoribosyltransferase family. As to quaternary structure, homodimer.

It localises to the cytoplasm. The catalysed reaction is AMP + diphosphate = 5-phospho-alpha-D-ribose 1-diphosphate + adenine. It participates in purine metabolism; AMP biosynthesis via salvage pathway; AMP from adenine: step 1/1. Functionally, catalyzes a salvage reaction resulting in the formation of AMP, that is energically less costly than de novo synthesis. In Bacillus mycoides (strain KBAB4) (Bacillus weihenstephanensis), this protein is Adenine phosphoribosyltransferase.